A 462-amino-acid polypeptide reads, in one-letter code: Argininosuccinate lyase (462 aa).

The protein belongs to the lyase 1 family. Argininosuccinate lyase subfamily.

It localises to the cytoplasm. It catalyses the reaction 2-(N(omega)-L-arginino)succinate = fumarate + L-arginine. The protein operates within amino-acid biosynthesis; L-arginine biosynthesis; L-arginine from L-ornithine and carbamoyl phosphate: step 3/3. This Hydrogenovibrio crunogenus (strain DSM 25203 / XCL-2) (Thiomicrospira crunogena) protein is Argininosuccinate lyase.